A 264-amino-acid chain; its full sequence is Tryptophan synthase alpha chain (264 aa).

Residues glutamate 44 and aspartate 55 each act as proton acceptor in the active site.

The protein belongs to the TrpA family. In terms of assembly, tetramer of two alpha and two beta chains.

The enzyme catalyses (1S,2R)-1-C-(indol-3-yl)glycerol 3-phosphate + L-serine = D-glyceraldehyde 3-phosphate + L-tryptophan + H2O. The protein operates within amino-acid biosynthesis; L-tryptophan biosynthesis; L-tryptophan from chorismate: step 5/5. Its function is as follows. The alpha subunit is responsible for the aldol cleavage of indoleglycerol phosphate to indole and glyceraldehyde 3-phosphate. In Lactiplantibacillus plantarum (strain ATCC BAA-793 / NCIMB 8826 / WCFS1) (Lactobacillus plantarum), this protein is Tryptophan synthase alpha chain.